The chain runs to 201 residues: Small ribosomal subunit protein uS4c (201 aa).

The interval 20 to 44 is disordered; it reads GLTSKRPRAGSDLRNQSRSGKKSQY. The 64-residue stretch at 89-152 folds into the S4 RNA-binding domain; sequence MRLDNTLFRL…NSRTLVQNLL (64 aa).

The protein belongs to the universal ribosomal protein uS4 family. In terms of assembly, part of the 30S ribosomal subunit. Contacts protein S5. The interaction surface between S4 and S5 is involved in control of translational fidelity.

The protein resides in the plastid. It localises to the chloroplast. Its function is as follows. One of the primary rRNA binding proteins, it binds directly to 16S rRNA where it nucleates assembly of the body of the 30S subunit. In terms of biological role, with S5 and S12 plays an important role in translational accuracy. This chain is Small ribosomal subunit protein uS4c (rps4), found in Aethionema grandiflorum (Persian stone-cress).